A 631-amino-acid polypeptide reads, in one-letter code: 1-deoxy-D-xylulose-5-phosphate synthase (631 aa).

Residues His-87 and 128 to 130 each bind thiamine diphosphate; that span reads GHS. Asp-159 serves as a coordination point for Mg(2+). Residues 160-161, Asn-188, Phe-295, and Glu-378 each bind thiamine diphosphate; that span reads GA. Asn-188 provides a ligand contact to Mg(2+).

This sequence belongs to the transketolase family. DXPS subfamily. As to quaternary structure, homodimer. Mg(2+) is required as a cofactor. Requires thiamine diphosphate as cofactor.

It carries out the reaction D-glyceraldehyde 3-phosphate + pyruvate + H(+) = 1-deoxy-D-xylulose 5-phosphate + CO2. It participates in metabolic intermediate biosynthesis; 1-deoxy-D-xylulose 5-phosphate biosynthesis; 1-deoxy-D-xylulose 5-phosphate from D-glyceraldehyde 3-phosphate and pyruvate: step 1/1. Catalyzes the acyloin condensation reaction between C atoms 2 and 3 of pyruvate and glyceraldehyde 3-phosphate to yield 1-deoxy-D-xylulose-5-phosphate (DXP). In Pseudomonas syringae pv. tomato (strain ATCC BAA-871 / DC3000), this protein is 1-deoxy-D-xylulose-5-phosphate synthase.